The chain runs to 319 residues: Sphingomyelinase D (319 aa).

Positions 1 to 23 are cleaved as a signal peptide; the sequence is MTPLLRTICAILCILIAVPLTFA. H44 is a catalytic residue. 3 residues coordinate Mg(2+): E64, D66, and D109. Positions 312–319 match the SMD-tail motif; the sequence is ATGADKPW.

Belongs to the sphingomyelinase D/phospholipase D family. Requires Mg(2+) as cofactor.

Its subcellular location is the secreted. The catalysed reaction is a sphingomyelin + H2O = an N-acylsphing-4-enine 1-phosphate + choline + H(+). Its function is as follows. Catalyzes the hydrolysis of sphingomyelin. Sphingomyelinases D are produced by some spider in their venoms, but also by arthropods such as ticks, or pathogenic bacteria and fungi. They might play a role in pathogenicity through different mechanisms, such as membrane destabilization and host cell penetration, but also pulmonary inflammation and cutaneous lesions. The chain is Sphingomyelinase D from Ajellomyces capsulatus (strain G186AR / H82 / ATCC MYA-2454 / RMSCC 2432) (Darling's disease fungus).